The following is a 407-amino-acid chain: UPF0761 membrane protein AZOSEA40600 (407 aa).

A run of 6 helical transmembrane segments spans residues 29–49 (SLAF…IALF), 92–112 (GLTL…LMTI), 132–152 (LMVH…SVLA), 174–194 (FARL…YYAV), 207–227 (GGIA…LFIV), and 239–259 (FAVL…ILLG).

This sequence belongs to the UPF0761 family.

It localises to the cell inner membrane. This chain is UPF0761 membrane protein AZOSEA40600, found in Aromatoleum aromaticum (strain DSM 19018 / LMG 30748 / EbN1) (Azoarcus sp. (strain EbN1)).